A 253-amino-acid polypeptide reads, in one-letter code: BRI3-binding protein (253 aa).

A run of 4 helical transmembrane segments spans residues 19-39 (VLLP…PGAQ), 131-151 (ALVL…TLGF), 164-181 (FWLV…YILH), and 190-210 (AVLP…MGYW). Positions 219–253 (SPSVEEKLEHLENQVRLLNIRLNRVLENLDRSKDK) form a coiled coil. Residue Ser250 is modified to Phosphoserine.

Interacts with LETMD1. Interacts with BRI3. Interacts with BRI3; the interaction is weak. Interacts with TMEM238L.

The protein localises to the mitochondrion outer membrane. Involved in tumorigenesis and may function by stabilizing p53/TP53. This chain is BRI3-binding protein, found in Mus musculus (Mouse).